A 2472-amino-acid chain; its full sequence is Spectrin alpha chain, non-erythrocytic 1 (2472 aa).

At Met-1 the chain carries N-acetylmethionine. Spectrin repeat units lie at residues 45 to 146, 150 to 251, 256 to 358, 361 to 465, 468 to 570, 574 to 676, 679 to 781, 785 to 888, and 891 to 969; these read RFQF…IKLL, KLVQ…QGKL, EVQR…ARLN, YRLQ…QYEQ, DLQL…AQLA, HLQQ…KLRE, QQQQ…QKLA, RLQQ…DLED, and QAQQ…ETGK. Ser-587 carries the phosphoserine modification. N6-acetyllysine is present on Lys-637. The residue at position 803 (Lys-803) is an N6-acetyllysine. Phosphoserine is present on residues Ser-924, Ser-982, Ser-999, Ser-1029, Ser-1031, and Ser-1041. In terms of domain architecture, SH3 spans 967 to 1026; it reads TGKELVLALYDYQEKSPREVTMKKGDILTLLNSTNKDWWKVEVNDRQGFVPAAYVKKLDP. Residues 1096-1166 form a Spectrin 10 repeat; sequence LFREANELQQ…LESEGLMAEE (71 aa). Tyr-1176 carries the post-translational modification Phosphotyrosine. Phosphoserine occurs at positions 1190, 1207, 1217, 1291, 1306, 1323, and 1338. The stretch at 1233–1336 is one Spectrin 11 repeat; it reads HEVQRFHRDA…RADQRKAKLG (104 aa). Spectrin repeat units follow at residues 1339 to 1442 and 1446 to 1549; these read HDLQ…MMLD and ELQL…KLGE. Lys-1519 is modified (N6-acetyllysine). Residues Ser-1550, Ser-1557, Ser-1578, Ser-1615, and Ser-1647 each carry the phosphoserine modification. 7 Spectrin repeats span residues 1552–1656, 1659–1762, 1764–1868, 1871–1974, 1978–2081, 2092–2194, and 2206–2310; these read TLQQ…KLKE, KQQN…KLNE, HRLH…RLEE, EYQQ…KLDE, FLQF…KLLE, LFLT…LELQ, and LRQE…NLEQ. At Thr-2020 the chain carries Phosphothreonine. Lys-2052 is subject to N6-acetyllysine. EF-hand domains follow at residues 2323–2358, 2366–2401, and 2404–2439; these read EALKEFSMMFKHFDKDKSGRLNHQEFKSCLRSLGYD, EPDPEFEAILDTVDPNRDGHVSLQEYMAFMISRETE, and KSSEEIESAFRALSSEGKPYVTKEELYQNLTREQAD. Positions 2336, 2338, 2340, 2342, 2347, 2379, 2381, 2383, 2385, and 2390 each coordinate Ca(2+). N6-acetyllysine is present on Lys-2421.

It belongs to the spectrin family. As to quaternary structure, like erythrocyte spectrin, the spectrin-like proteins are capable of forming dimers which can further associate to tetramers. Interacts (via C-terminal spectrin repeats) with TRPC4. Interacts with CALM and EMD. Interacts with isoform 1 of ACP1. Identified in a complex with ACTN4, CASK, IQGAP1, MAGI2, NPHS1 and SPTBN1. Interacts with SHANK3 (via ANK repeats). Interacts with CLN3; this interaction regulates the fodrin localization at the plasma membrane. In terms of processing, phosphorylation of Tyr-1176 decreases sensitivity to cleavage by calpain in vitro.

Its subcellular location is the cytoplasm. The protein localises to the cytoskeleton. It is found in the cell cortex. Functionally, fodrin, which seems to be involved in secretion, interacts with calmodulin in a calcium-dependent manner and is thus candidate for the calcium-dependent movement of the cytoskeleton at the membrane. The protein is Spectrin alpha chain, non-erythrocytic 1 (SPTAN1) of Homo sapiens (Human).